The chain runs to 338 residues: GTPase Obg (338 aa).

An Obg domain is found at 1 to 159 (MSFIDEVKIH…RWLRLELKLM (159 aa)). Residues 160–331 (ADVGLLGMPS…LLDEIARNLW (172 aa)) form the OBG-type G domain. GTP-binding positions include 166 to 173 (GMPSVGKS), 191 to 195 (FTTLK), 213 to 216 (DIPG), 283 to 286 (NKID), and 312 to 314 (SAA). The Mg(2+) site is built by Ser173 and Thr193.

Belongs to the TRAFAC class OBG-HflX-like GTPase superfamily. OBG GTPase family. In terms of assembly, monomer. Mg(2+) is required as a cofactor.

The protein localises to the cytoplasm. An essential GTPase which binds GTP, GDP and possibly (p)ppGpp with moderate affinity, with high nucleotide exchange rates and a fairly low GTP hydrolysis rate. Plays a role in control of the cell cycle, stress response, ribosome biogenesis and in those bacteria that undergo differentiation, in morphogenesis control. The sequence is that of GTPase Obg from Geotalea uraniireducens (strain Rf4) (Geobacter uraniireducens).